Reading from the N-terminus, the 51-residue chain is Small ribosomal subunit protein eS31 (51 aa).

Zn(2+) contacts are provided by cysteine 22, cysteine 25, cysteine 40, and cysteine 43. The C4-type zinc finger occupies 22–43 (CPRCGPGVFMADHGDRWACGRC).

Belongs to the eukaryotic ribosomal protein eS31 family. In terms of assembly, part of the 30S ribosomal subunit. Zn(2+) is required as a cofactor.

This chain is Small ribosomal subunit protein eS31, found in Pyrococcus abyssi (strain GE5 / Orsay).